The chain runs to 310 residues: Tagatose-6-phosphate kinase (310 aa).

This sequence belongs to the carbohydrate kinase PfkB family. LacC subfamily.

It carries out the reaction D-tagatofuranose 6-phosphate + ATP = D-tagatofuranose 1,6-bisphosphate + ADP + H(+). Its pathway is carbohydrate metabolism; D-tagatose 6-phosphate degradation; D-glyceraldehyde 3-phosphate and glycerone phosphate from D-tagatose 6-phosphate: step 1/2. The polypeptide is Tagatose-6-phosphate kinase (Staphylococcus aureus (strain MRSA252)).